The sequence spans 297 residues: 4-hydroxy-tetrahydrodipicolinate synthase (297 aa).

Thr51 is a binding site for pyruvate. Tyr139 acts as the Proton donor/acceptor in catalysis. The Schiff-base intermediate with substrate role is filled by Lys167. Val209 is a binding site for pyruvate.

This sequence belongs to the DapA family. As to quaternary structure, homotetramer; dimer of dimers.

The protein localises to the cytoplasm. The catalysed reaction is L-aspartate 4-semialdehyde + pyruvate = (2S,4S)-4-hydroxy-2,3,4,5-tetrahydrodipicolinate + H2O + H(+). The protein operates within amino-acid biosynthesis; L-lysine biosynthesis via DAP pathway; (S)-tetrahydrodipicolinate from L-aspartate: step 3/4. Its function is as follows. Catalyzes the condensation of (S)-aspartate-beta-semialdehyde [(S)-ASA] and pyruvate to 4-hydroxy-tetrahydrodipicolinate (HTPA). This chain is 4-hydroxy-tetrahydrodipicolinate synthase, found in Albidiferax ferrireducens (strain ATCC BAA-621 / DSM 15236 / T118) (Rhodoferax ferrireducens).